A 316-amino-acid chain; its full sequence is 4-hydroxy-3-methylbut-2-enyl diphosphate reductase (316 aa).

Residue C12 participates in [4Fe-4S] cluster binding. H43 and H81 together coordinate (2E)-4-hydroxy-3-methylbut-2-enyl diphosphate. Positions 43 and 81 each coordinate dimethylallyl diphosphate. Residues H43 and H81 each coordinate isopentenyl diphosphate. C103 provides a ligand contact to [4Fe-4S] cluster. H131 is a (2E)-4-hydroxy-3-methylbut-2-enyl diphosphate binding site. Residue H131 participates in dimethylallyl diphosphate binding. Residue H131 coordinates isopentenyl diphosphate. E133 acts as the Proton donor in catalysis. T170 provides a ligand contact to (2E)-4-hydroxy-3-methylbut-2-enyl diphosphate. [4Fe-4S] cluster is bound at residue C198. (2E)-4-hydroxy-3-methylbut-2-enyl diphosphate-binding residues include S226, N228, and S271. Residues S226, N228, and S271 each contribute to the dimethylallyl diphosphate site. Residues S226, N228, and S271 each coordinate isopentenyl diphosphate.

This sequence belongs to the IspH family. It depends on [4Fe-4S] cluster as a cofactor.

The enzyme catalyses isopentenyl diphosphate + 2 oxidized [2Fe-2S]-[ferredoxin] + H2O = (2E)-4-hydroxy-3-methylbut-2-enyl diphosphate + 2 reduced [2Fe-2S]-[ferredoxin] + 2 H(+). It catalyses the reaction dimethylallyl diphosphate + 2 oxidized [2Fe-2S]-[ferredoxin] + H2O = (2E)-4-hydroxy-3-methylbut-2-enyl diphosphate + 2 reduced [2Fe-2S]-[ferredoxin] + 2 H(+). The protein operates within isoprenoid biosynthesis; dimethylallyl diphosphate biosynthesis; dimethylallyl diphosphate from (2E)-4-hydroxy-3-methylbutenyl diphosphate: step 1/1. It functions in the pathway isoprenoid biosynthesis; isopentenyl diphosphate biosynthesis via DXP pathway; isopentenyl diphosphate from 1-deoxy-D-xylulose 5-phosphate: step 6/6. Functionally, catalyzes the conversion of 1-hydroxy-2-methyl-2-(E)-butenyl 4-diphosphate (HMBPP) into a mixture of isopentenyl diphosphate (IPP) and dimethylallyl diphosphate (DMAPP). Acts in the terminal step of the DOXP/MEP pathway for isoprenoid precursor biosynthesis. The sequence is that of 4-hydroxy-3-methylbut-2-enyl diphosphate reductase from Bacillus thuringiensis (strain Al Hakam).